The sequence spans 357 residues: Meiotic driver wtf9 (357 aa).

Residues 1–39 (MKNKYYPLRSSMDEMSAKNDNEIDLEKGPLPEYNSEDGS) are disordered. Over residues 11–29 (SMDEMSAKNDNEIDLEKGP) the composition is skewed to basic and acidic residues. 7 consecutive transmembrane segments (helical) span residues 89-109 (LLIS…CVNP), 119-139 (AFFV…FCFF), 149-169 (CIKV…ISLA), 198-218 (VVII…RSKF), 232-252 (CSIS…FWTL), 256-276 (FSGL…TKGL), and 286-306 (ATGY…LFFY).

It belongs to the WTF family. Homomer. Forms protein aggregates. The two isoforms can interact with each other and with themselves. High sequence similarity is required for their interaction.

The protein resides in the spore membrane. The protein localises to the vacuole membrane. It localises to the ascus epiplasm. It is found in the cytoplasm. Its subcellular location is the endoplasmic reticulum membrane. Functionally, promotes unequal transmission of alleles from the parental zygote to progeny spores by acting as poison/antidote system where the poison and antidote proteins are produced from the same locus; the poison component is trans-acting and targets all spores within an ascus whereas the antidote component is spore-specific, leading to poisoning of all progeny that do not inherit the allele. Localizes isoform 2 to the vacuole thereby facilitating its degradation. Its function is as follows. Forms toxic aggregates that disrupt spore maturation. The sequence is that of Meiotic driver wtf9 from Schizosaccharomyces kambucha (Fission yeast).